The following is a 227-amino-acid chain: Enolase-phosphatase E1 (227 aa).

Belongs to the HAD-like hydrolase superfamily. MasA/MtnC family. As to quaternary structure, monomer. Mg(2+) is required as a cofactor.

It carries out the reaction 5-methylsulfanyl-2,3-dioxopentyl phosphate + H2O = 1,2-dihydroxy-5-(methylsulfanyl)pent-1-en-3-one + phosphate. It participates in amino-acid biosynthesis; L-methionine biosynthesis via salvage pathway; L-methionine from S-methyl-5-thio-alpha-D-ribose 1-phosphate: step 3/6. Its pathway is amino-acid biosynthesis; L-methionine biosynthesis via salvage pathway; L-methionine from S-methyl-5-thio-alpha-D-ribose 1-phosphate: step 4/6. Its function is as follows. Bifunctional enzyme that catalyzes the enolization of 2,3-diketo-5-methylthiopentyl-1-phosphate (DK-MTP-1-P) into the intermediate 2-hydroxy-3-keto-5-methylthiopentenyl-1-phosphate (HK-MTPenyl-1-P), which is then dephosphorylated to form the acireductone 1,2-dihydroxy-3-keto-5-methylthiopentene (DHK-MTPene). This chain is Enolase-phosphatase E1, found in Azotobacter vinelandii (strain DJ / ATCC BAA-1303).